Consider the following 407-residue polypeptide: Nicotinate phosphoribosyltransferase (407 aa).

At His224 the chain carries Phosphohistidine; by autocatalysis.

It belongs to the NAPRTase family. Transiently phosphorylated on a His residue during the reaction cycle. Phosphorylation strongly increases the affinity for substrates and increases the rate of nicotinate D-ribonucleotide production. Dephosphorylation regenerates the low-affinity form of the enzyme, leading to product release.

It carries out the reaction nicotinate + 5-phospho-alpha-D-ribose 1-diphosphate + ATP + H2O = nicotinate beta-D-ribonucleotide + ADP + phosphate + diphosphate. It functions in the pathway cofactor biosynthesis; NAD(+) biosynthesis; nicotinate D-ribonucleotide from nicotinate: step 1/1. Its function is as follows. Catalyzes the synthesis of beta-nicotinate D-ribonucleotide from nicotinate and 5-phospho-D-ribose 1-phosphate at the expense of ATP. The protein is Nicotinate phosphoribosyltransferase of Pseudomonas syringae pv. tomato (strain ATCC BAA-871 / DC3000).